Consider the following 989-residue polypeptide: R3H domain-containing protein 2 (989 aa).

Disordered regions lie at residues 23–71 (EESV…AKSN) and 106–147 (SCPS…QEYT). Residues 36–56 (PSKEEIEKESEDTSLRQETQR) show a composition bias toward basic and acidic residues. S37 carries the post-translational modification Phosphoserine. A compositionally biased stretch (basic residues) spans 58–71 (TSNHGHARKRAKSN). Over residues 109–143 (SDKEEEKSTKDVSEKEDKDKNKEKVPRRMLSRDSS) the composition is skewed to basic and acidic residues. Residue S143 is modified to Phosphoserine. In terms of domain architecture, R3H spans 169–232 (RMMLLKLEQE…AVIINKTSNT (64 aa)). The 71-residue stretch at 233-303 (RIPEQRFSEH…VRERIFARET (71 aa)) folds into the SUZ domain. Disordered stretches follow at residues 267–288 (DDNQ…EERE), 306–390 (NGYL…ISRP), 416–479 (TAQQ…FQPP), 493–524 (ASTG…GYMQ), 674–738 (GTSP…PSMV), 751–793 (RGQK…SLSN), and 848–867 (QGQS…LKSA). Over residues 277 to 288 (DGRRSKSIEERE) the composition is skewed to basic and acidic residues. Low complexity predominate over residues 320–331 (SRTSSSRQSSTD). Residues S344, S347, and S363 each carry the phosphoserine modification. Over residues 416-428 (TAQQQQQQQQQLP) the composition is skewed to low complexity. 2 stretches are compositionally biased toward polar residues: residues 454–466 (PFGQ…QGST) and 493–517 (ASTG…QQVL). The segment covering 695–704 (SPSPCSPPQM) has biased composition (pro residues). The segment covering 705-727 (PQQYSGVSPSGPGVVVMQLNVPN) has biased composition (low complexity). A compositionally biased stretch (polar residues) spans 761–771 (PESSPQANTQM). Positions 772-790 (SSSPVTSPTQSPAPSPVTS) are enriched in low complexity. Residues S866 and S868 each carry the phosphoserine modification. Residues T869 and T873 each carry the phosphothreonine modification.

Its subcellular location is the nucleus. The protein is R3H domain-containing protein 2 (R3HDM2) of Bos taurus (Bovine).